The sequence spans 1590 residues: Defective chorion protein, FC177 isoform (1590 aa).

An N-terminal signal peptide occupies residues 1–19 (MRLFSLLPLLALLVVQAAG). Disordered regions lie at residues 23–60 (VTSD…PSIN), 184–212 (APAP…PDAP), and 268–294 (PAQP…EDPY). Polar residues predominate over residues 32 to 41 (AGSTTNSTTD). A compositionally biased stretch (low complexity) spans 268–280 (PAQPAAAGTDAQA). 5 consecutive repeat copies span residues 493-518 (QNPM…QQIQ), 519-544 (QNPM…QQIQ), 545-570 (QNPM…QQIQ), 571-596 (QNPM…QQIQ), and 597-622 (QNPM…QQIQ). The segment at 493–788 (QNPMMMQQRQ…IQQQQRQMMQ (296 aa)) is 12 X 26 AA approximate tandem repeats, Glu, Met-rich. The 6; approximate repeat unit spans residues 623-652 (QNPMMMQQRQWSEEQAKIQHDQQMAQQMAQ). One copy of the 7; approximate repeat lies at 653 to 680 (QGLMMTEQRQRQWSEDQAKIQQAQQMAQ). An 8; approximate repeat occupies 681-696 (QTPMMMPQMQQRQWTE). One copy of the 9; approximate repeat lies at 697–720 (DPQMVQQMQQRQWAEDQTRMQMAQ). Residues 721–733 (QNPMMQQQRQMAE) form a 10; approximate repeat. One copy of the 11; approximate repeat lies at 734–758 (NPQMMQQRQWSEEQTKIEQAQQMAQ). Residues 759–788 (QNQMMMQQMQQRQWSEDQAQIQQQQRQMMQ) form a 12; approximate repeat. 6 disordered regions span residues 843–875 (GPQM…SKSA), 944–983 (RTIN…EHRV), 1119–1221 (EEDA…TKSI), 1261–1352 (PVTE…DDNN), 1375–1515 (FAQG…QATV), and 1538–1590 (EKKS…QTKA). Residues 957–977 (SESQKSNSNPPTTLTPAPQEQ) are compositionally biased toward polar residues. Positions 1119 to 1130 (EEDAQQEPMEEE) are enriched in acidic residues. Basic and acidic residues predominate over residues 1131-1148 (QLQHDPNTEPQYNHKDFV). Residues 1151-1195 (TTSTASPITSTTEAATPTGSDSTSEATVTPEVTTTTSTSTTTTTE) show a composition bias toward low complexity. Residues 1205–1221 (QQDSQAEAESSHVTKSI) are compositionally biased toward polar residues. Residues 1272–1288 (EPSKQEDKPKVEEKVIA) show a composition bias toward basic and acidic residues. A compositionally biased stretch (acidic residues) spans 1295-1306 (EQEEELEEDEDS). 2 stretches are compositionally biased toward low complexity: residues 1307-1319 (TSIS…PSPS) and 1435-1452 (DSGS…TPSP). Basic residues predominate over residues 1493–1504 (QRPKKSMSKPKK). The span at 1505–1515 (QSSQVTTQATV) shows a compositional bias: low complexity. The span at 1554-1576 (TKPKSIKPVKVIKRKRLRRRQHK) shows a compositional bias: basic residues. Residues 1577–1590 (SIATTIRSPIQTKA) show a composition bias toward polar residues.

Its subcellular location is the secreted. Required for proper assembly of the eggshell. In Drosophila melanogaster (Fruit fly), this protein is Defective chorion protein, FC177 isoform.